A 618-amino-acid polypeptide reads, in one-letter code: Polyamine transporter TPO5 (618 aa).

The Cytoplasmic segment spans residues 1–60 (MPEYTLLADNIRENIVHFDPNGLFDNLHTIVHEDDSQENEEAEHFNYDQVLDKSLLSRGS). The chain crosses the membrane as a helical span at residues 61–84 (IVGLGLGLMSPVLGMCTSMAIGLI). Residues 85–90 (NGGPLT) are Extracellular-facing. A helical transmembrane segment spans residues 91 to 110 (IMLGFLISGVCIWFSSLSLG). At 111–131 (EIVSKFPMELHVGSAMLAPEK) the chain is on the cytoplasmic side. Residues 132–148 (LKLVCSWYTGWLMLIGN) form a helical membrane-spanning segment. The Extracellular segment spans residues 149-154 (WTMSTS). Residues 155–171 (ITFAGAQLTISLILMTN) traverse the membrane as a helical segment. Topologically, residues 172–179 (SNLISEAH) are cytoplasmic. Residues 180–200 (LIFYTVIVFYLVVTVVGLVNL) traverse the membrane as a helical segment. The Extracellular segment spans residues 201-211 (KFARFIETINK). The helical transmembrane segment at 212–231 (VCVYWIIYAIIFIDILLLVF) threads the bilayer. Topologically, residues 232-297 (HKGKFRSLKY…EKDIPRGMSN (66 aa)) are cytoplasmic. The helical transmembrane segment at 298–317 (AVLLSAFSGVIFLIPIMLIL) threads the bilayer. Residues 318 to 342 (PDNDLLFTNHKVLPIVNIFTKSTDS) lie on the Extracellular side of the membrane. The helical transmembrane segment at 343-367 (VVLSFFLVLLILGNLLFSGIGSITT) threads the bilayer. At 368–402 (SSRAVYSFSRDQAIPYYDKWTYVEPDSQSKVPKNS) the chain is on the cytoplasmic side. A helical membrane pass occupies residues 403-419 (VVLSMIISYFLGLLALI). The Extracellular portion of the chain corresponds to 420 to 425 (STAAFN). Residues 426 to 449 (AFIGAAVLCLCSATFIPLVLVLFT) traverse the membrane as a helical segment. Topologically, residues 450–464 (RRRAIRSAPVKIRYK) are cytoplasmic. Residues 465–486 (FGWFINIVSIVWLLLSMVSVCL) traverse the membrane as a helical segment. At 487–498 (PTQVPVTFKTMN) the chain is on the extracellular side. Residues 499–516 (YALMVYVFCILVITGLYF) form a helical membrane-spanning segment. The Cytoplasmic segment spans residues 517-618 (KWGKYNFRLP…DLADDRRYDI (102 aa)). S569 is modified (phosphoserine). Positions 576-618 (VHPKSSTENPFEENEENVITDYGDEHHTAEQEFDLADDRRYDI) are disordered. Residues 598–618 (GDEHHTAEQEFDLADDRRYDI) show a composition bias toward basic and acidic residues.

It belongs to the amino acid-polyamine-organocation (APC) superfamily.

The protein localises to the golgi apparatus membrane. Functionally, required for polyamine transport. Transports putrescine effectively and spermidine less effectively. The sequence is that of Polyamine transporter TPO5 (TPO5) from Saccharomyces cerevisiae (strain ATCC 204508 / S288c) (Baker's yeast).